Here is a 237-residue protein sequence, read N- to C-terminus: Tyrosine-protein kinase YwqD (237 aa).

Tyr228 is modified (phosphotyrosine; by autocatalysis).

Belongs to the CpsD/CapB family. Post-translationally, autophosphorylated in vitro, which inhibits ATPase activity. Dephosphorylated by YwqE in vitro.

It carries out the reaction L-tyrosyl-[protein] + ATP = O-phospho-L-tyrosyl-[protein] + ADP + H(+). May be involved in the regulation of capsular polysaccharide biosynthesis. Autophosphorylates in vitro. Phosphorylates and activates in vitro two UDP-glucose dehydrogenases, YwqF and TuaD, as well as the DNA-binding proteins Ssb and SsbB. In Bacillus subtilis (strain 168), this protein is Tyrosine-protein kinase YwqD (ywqD).